The chain runs to 369 residues: Chaperone protein DnaJ (369 aa).

The J domain maps to D3–G67. A CR-type zinc finger spans residues G123–R205. Positions 136, 139, 153, 156, 179, 182, 193, and 196 each coordinate Zn(2+). CXXCXGXG motif repeat units follow at residues C136–C143, C153–G160, C179–G186, and C193–G200.

It belongs to the DnaJ family. In terms of assembly, homodimer. Zn(2+) is required as a cofactor.

The protein resides in the cytoplasm. Participates actively in the response to hyperosmotic and heat shock by preventing the aggregation of stress-denatured proteins and by disaggregating proteins, also in an autonomous, DnaK-independent fashion. Unfolded proteins bind initially to DnaJ; upon interaction with the DnaJ-bound protein, DnaK hydrolyzes its bound ATP, resulting in the formation of a stable complex. GrpE releases ADP from DnaK; ATP binding to DnaK triggers the release of the substrate protein, thus completing the reaction cycle. Several rounds of ATP-dependent interactions between DnaJ, DnaK and GrpE are required for fully efficient folding. Also involved, together with DnaK and GrpE, in the DNA replication of plasmids through activation of initiation proteins. The chain is Chaperone protein DnaJ from Leifsonia xyli subsp. xyli (strain CTCB07).